A 244-amino-acid polypeptide reads, in one-letter code: Lymphotoxin-beta (244 aa).

Topologically, residues 1–18 (MGALGLEGRGGRLQGRGS) are cytoplasmic. Residues 19-48 (LLLAVAGATSLVTLLLAVPITVLAVLALVP) form a helical; Signal-anchor for type II membrane protein membrane-spanning segment. Residues 49 to 244 (QDQGGLVTDT…KTFFGAVMVG (196 aa)) are Extracellular-facing. One can recognise a THD domain in the interval 88–243 (PAAHLIGAPL…GKTFFGAVMV (156 aa)). N-linked (GlcNAc...) asparagine glycosylation is present at N222.

Belongs to the tumor necrosis factor family. As to quaternary structure, heterotrimer of either two LTB and one LTA subunits or (less prevalent) two LTA and one LTB subunits.

It is found in the membrane. Cytokine that binds to LTBR/TNFRSF3. May play a specific role in immune response regulation. Provides the membrane anchor for the attachment of the heterotrimeric complex to the cell surface. This Macaca mulatta (Rhesus macaque) protein is Lymphotoxin-beta (LTB).